Consider the following 511-residue polypeptide: MNMKKATIVSAAGIAVTAFAAPSVVSANTVVVASGDTLWGIASKTGTTVDQLKQLNKLDSDRIVPGQKLTIKEVAAQKVEKSVSATWLNVRHAPDANEKILTSLKGRTVVKVESSEANGWNKISFDNGKTGYVNGKYLSDAKVAAPVVTKAVTHKAEAKVAATSTHAVKVDTNASTYKVKSGDTIWALSVKYGVPVQKLIEWNNLSSSSIYVGQTIAVKEAAAKAAPTTVKQAAPAKVAPKQEVKQTAPAKQEQAKPAAKETVKPAVSKPKAATPAPTAKPAVEQKASTPAVDTNAATYKVQNGDSLGKIASLFKVSVADLTNWNNLNATITIYAGQELSVKASAAKPKPAAPAKPAVSKPATSTPAKVTPTNTTNNSTPTTNVNNNTSQSSSASFSALYAEAKKHLGKPYTWGARGPSTFDCSGFTSYVFNQVGLSLSGNSATQYANSTKISESQAQPGDLVFFNYGSGIAHVGIYIGGGQMIDAQDNGVSIDNIHGNGWGQYLVGFGRV.

The first 27 residues, 1–27, serve as a signal peptide directing secretion; it reads MNMKKATIVSAAGIAVTAFAAPSVVSA. Residues 28-71 form the LysM 1 domain; the sequence is NTVVVASGDTLWGIASKTGTTVDQLKQLNKLDSDRIVPGQKLTI. Residues 78-142 enclose the SH3b domain; the sequence is KVEKSVSATW…VNGKYLSDAK (65 aa). The region spanning 175–218 is the LysM 2 domain; sequence STYKVKSGDTIWALSVKYGVPVQKLIEWNNLSSSSIYVGQTIAV. Low complexity-rich tracts occupy residues 229-257 and 264-282; these read TVKQAAPAKVAPKQEVKQTAPAKQEQAKP and KPAVSKPKAATPAPTAKPA. The disordered stretch occupies residues 229-291; sequence TVKQAAPAKV…AVEQKASTPA (63 aa). One can recognise a LysM 3 domain in the interval 297–341; it reads ATYKVQNGDSLGKIASLFKVSVADLTNWNNLNATITIYAGQELSV. Composition is skewed to low complexity over residues 347-362 and 372-390; these read KPKPAAPAKPAVSKPA and TNTTNNSTPTTNVNNNTSQ. The interval 347–390 is disordered; that stretch reads KPKPAAPAKPAVSKPATSTPAKVTPTNTTNNSTPTTNVNNNTSQ. The NlpC/P60 domain occupies 393–511; sequence SASFSALYAE…GQYLVGFGRV (119 aa). The active-site Nucleophile is Cys423. His473 acts as the Proton acceptor in catalysis. Residue Asp485 is part of the active site.

It belongs to the peptidase C40 family.

Its function is as follows. This major extracellular protein may be involved in the invasion of non-professional phagocytic cells by Listeria. In Listeria grayi (Listeria murrayi), this protein is Probable endopeptidase p60 (iap).